The chain runs to 729 residues: FYN-binding protein 2 (729 aa).

4 disordered regions span residues 18–130 (KFNA…EEKG), 170–320 (EGQK…SAEL), 371–408 (ELSP…PPKV), and 469–490 (VTKE…KTYD). Composition is skewed to polar residues over residues 69–81 (GVSQ…TLKS), 89–99 (KTSSSSGTPEK), 190–216 (GAQT…SSVS), and 226–240 (KSPA…SQCQ). The span at 275–284 (GPPPPKPSKP) shows a compositional bias: pro residues. Over residues 374 to 402 (PRPKEEENTMEEKESWESEPLEPRKELHP) the composition is skewed to basic and acidic residues. Residues 473–485 (TPSPSTIRSSSSS) show a composition bias toward low complexity. The residue at position 489 (tyrosine 489) is a Phosphotyrosine. An SH2-binding; to LCP2 motif is present at residues 520–523 (YEDI). Positions 576–603 (DLGPRSQDDSQDGIIYDDVDTREKESND) are disordered. Over residues 584 to 593 (DSQDGIIYDD) the composition is skewed to acidic residues. At tyrosine 591 the chain carries Phosphotyrosine. Residues 594–603 (VDTREKESND) are compositionally biased toward basic and acidic residues. An SH3 domain is found at 668–728 (LVINRAVACA…LVEHLDFKHQ (61 aa)).

Interacts with SKAP1, LCK and FYN. The phosphorylated form interacts with LCP2. Post-translationally, phosphorylation is required for its function in T-cell activation.

Its subcellular location is the membrane raft. Functionally, adapter protein that plays a role in T-cell receptor (TCR)-mediated activation of signaling pathways. Required for T-cell activation and integrin-mediated T-cell adhesion in response to TCR stimulation. This chain is FYN-binding protein 2, found in Mus musculus (Mouse).